A 529-amino-acid chain; its full sequence is Calcium-dependent protein kinase 3 (529 aa).

The segment at 1-73 (MGHRHSKSKS…GRILGRPMEE (73 aa)) is disordered. G2 carries N-myristoyl glycine lipidation. A compositionally biased stretch (gly residues) spans 39–53 (SGSGTVGSSGSGTGG). Positions 78–336 (YEFGRELGRG…AAEVLNHPWI (259 aa)) constitute a Protein kinase domain. ATP-binding positions include 84–92 (LGRGQFGVT) and K107. The active-site Proton acceptor is the D202. S242 is subject to Phosphoserine. An autoinhibitory domain region spans residues 342 to 372 (ASDKPLDNAVLSRMKQFRAMNKLKKMALKVI). EF-hand domains lie at 379–414 (EEII…LGSK), 415–450 (ISEA…MNRI), 451–485 (ERED…KYNM), and 486–521 (GDDK…GNPE). D392, D394, N396, E403, D428, D430, D432, S434, E439, D464, D466, S468, Y470, E475, D499, D501, D503, K505, and E510 together coordinate Ca(2+).

It belongs to the protein kinase superfamily. Ser/Thr protein kinase family. CDPK subfamily. In terms of assembly, interacts with GHR1. Expressed in both guard cells and mesophyll cells.

Its subcellular location is the cytoplasm. The protein resides in the nucleus. The catalysed reaction is L-seryl-[protein] + ATP = O-phospho-L-seryl-[protein] + ADP + H(+). It carries out the reaction L-threonyl-[protein] + ATP = O-phospho-L-threonyl-[protein] + ADP + H(+). With respect to regulation, activated by calcium. Autophosphorylation may play an important role in the regulation of the kinase activity. Its function is as follows. May play a role in signal transduction pathways that involve calcium as a second messenger. Functions in abscisic acid (ABA) regulation of guard cell S-type anion- and Ca(2+)-permeable channels and stomatal closure. This is Calcium-dependent protein kinase 3 from Arabidopsis thaliana (Mouse-ear cress).